The chain runs to 680 residues: Probable ATP-dependent RNA helicase pitchoune (680 aa).

Positions 1–168 (MSIREKLLMK…GKPAKDDEPF (168 aa)) are disordered. Polar residues predominate over residues 29-42 (KNAQKQEPPKQNGN). The segment covering 59–69 (DEDDDLEEDFQ) has biased composition (acidic residues). Residues 74–83 (PKKKQQKQPP) are compositionally biased toward basic residues. Acidic residues predominate over residues 95–141 (SESDDDEQEDEADEDSDLDEVAEVDEEDVDSGSEDDDQQEDEDEEEP). Residues 187-215 (FASLKGAVSEATLRAIKEMGFTEMTEIQS) carry the Q motif motif. Positions 218-393 (LTPLLKGRDL…KLALKSEPIY (176 aa)) constitute a Helicase ATP-binding domain. Position 231–238 (231–238 (AQTGSGKT)) interacts with ATP. The DEVD box motif lies at 341-344 (DEVD). The Helicase C-terminal domain occupies 407-577 (GLEQGYIVCP…DIQLQLEKLI (171 aa)). The interval 659–680 (GSASKQRHFKQVNRDQAKKFMR) is disordered. A compositionally biased stretch (basic and acidic residues) spans 670–680 (VNRDQAKKFMR).

This sequence belongs to the DEAD box helicase family. DDX18/HAS1 subfamily.

The protein resides in the nucleus. It localises to the nucleolus. It carries out the reaction ATP + H2O = ADP + phosphate + H(+). Probable RNA-dependent helicase. Functions in cell growth and proliferation. May have a role in ribosome biogenesis and, consequently, in protein biosynthesis. The polypeptide is Probable ATP-dependent RNA helicase pitchoune (pit) (Drosophila melanogaster (Fruit fly)).